A 235-amino-acid chain; its full sequence is 7-cyano-7-deazaguanine synthase (235 aa).

11 to 21 (FSGGQDSTTCV) is an ATP binding site. Residues cysteine 199, cysteine 214, cysteine 217, and cysteine 220 each coordinate Zn(2+).

The protein belongs to the QueC family. Requires Zn(2+) as cofactor.

It carries out the reaction 7-carboxy-7-deazaguanine + NH4(+) + ATP = 7-cyano-7-deazaguanine + ADP + phosphate + H2O + H(+). It participates in purine metabolism; 7-cyano-7-deazaguanine biosynthesis. Functionally, catalyzes the ATP-dependent conversion of 7-carboxy-7-deazaguanine (CDG) to 7-cyano-7-deazaguanine (preQ(0)). The polypeptide is 7-cyano-7-deazaguanine synthase (Janthinobacterium sp. (strain Marseille) (Minibacterium massiliensis)).